The chain runs to 218 residues: Telomere repeats-binding bouquet formation protein 2 (218 aa).

The segment at 117 to 143 is disordered; it reads HDRMASSDKENIRPTPEHKQELSKSAE.

The protein belongs to the TERB2 family. In terms of assembly, component of the MAJIN-TERB1-TERB2 complex, composed of MAJIN, TERB1 and TERB2. Specifically expressed in germline tissues.

Its subcellular location is the chromosome. The protein resides in the telomere. The protein localises to the nucleus inner membrane. Its function is as follows. Meiosis-specific telomere-associated protein involved in meiotic telomere attachment to the nucleus inner membrane, a crucial step for homologous pairing and synapsis. Component of the MAJIN-TERB1-TERB2 complex, which promotes telomere cap exchange by mediating attachment of telomeric DNA to the inner nuclear membrane and replacement of the protective cap of telomeric chromosomes: in early meiosis, the MAJIN-TERB1-TERB2 complex associates with telomeric DNA and the shelterin/telosome complex. During prophase, the complex matures and promotes release of the shelterin/telosome complex from telomeric DNA. The sequence is that of Telomere repeats-binding bouquet formation protein 2 from Mus musculus (Mouse).